The chain runs to 405 residues: Glucose-1-phosphate adenylyltransferase 1 (405 aa).

Alpha-D-glucose 1-phosphate is bound by residues Y96, G161, 176–177 (EK), and S194.

Belongs to the bacterial/plant glucose-1-phosphate adenylyltransferase family. As to quaternary structure, homotetramer.

The catalysed reaction is alpha-D-glucose 1-phosphate + ATP + H(+) = ADP-alpha-D-glucose + diphosphate. It functions in the pathway glycan biosynthesis; glycogen biosynthesis. In terms of biological role, involved in the biosynthesis of ADP-glucose, a building block required for the elongation reactions to produce glycogen. Catalyzes the reaction between ATP and alpha-D-glucose 1-phosphate (G1P) to produce pyrophosphate and ADP-Glc. The protein is Glucose-1-phosphate adenylyltransferase 1 of Vibrio vulnificus (strain CMCP6).